The following is a 373-amino-acid chain: Cytoplasmic tRNA 2-thiolation protein 1 (373 aa).

This sequence belongs to the TtcA family. CTU1/NCS6/ATPBD3 subfamily.

Its subcellular location is the cytoplasm. It participates in tRNA modification; 5-methoxycarbonylmethyl-2-thiouridine-tRNA biosynthesis. In terms of biological role, plays a central role in 2-thiolation of mcm(5)S(2)U at tRNA wobble positions of tRNA(Lys), tRNA(Glu) and tRNA(Gln). Directly binds tRNAs and probably acts by catalyzing adenylation of tRNAs, an intermediate required for 2-thiolation. It is unclear whether it acts as a sulfurtransferase that transfers sulfur from thiocarboxylated URM1 onto the uridine of tRNAs at wobble position. Prior mcm(5) tRNA modification by the elongator complex is required for 2-thiolation. May also be involved in protein urmylation. This chain is Cytoplasmic tRNA 2-thiolation protein 1, found in Eremothecium gossypii (strain ATCC 10895 / CBS 109.51 / FGSC 9923 / NRRL Y-1056) (Yeast).